The primary structure comprises 212 residues: Ras-related protein Rab-15 (212 aa).

Ser17, Gly18, Val19, Gly20, Lys21, Thr22, Cys23, Ser35, Ser39, and Thr40 together coordinate GTP. Thr22 is a binding site for Mg(2+). 2 consecutive short sequence motifs (switch) follow at residues 31 to 45 and 63 to 80; these read NEFH…GVDF and DTAG…YYRR. Mg(2+) is bound by residues Thr40 and Asp63. Gly66, Asn121, Lys122, Asp124, Ser151, and Ala152 together coordinate GTP. The segment at 192–212 is disordered; sequence ELEEDEGKPEGPANSSKTCWC. S-geranylgeranyl cysteine attachment occurs at residues Cys210 and Cys212. Cys212 is modified (cysteine methyl ester).

It belongs to the small GTPase superfamily. Rab family. In terms of assembly, the GTP bound form of RAB15 interacts with REP15. Interacts (GTP-bound form) with MICAL1, MICAL3, MICALCL, EHBP1 and EHBP1L1. The cofactor is Mg(2+).

It localises to the cell membrane. The enzyme catalyses GTP + H2O = GDP + phosphate + H(+). With respect to regulation, regulated by guanine nucleotide exchange factors (GEFs) which promote the exchange of bound GDP for free GTP. Regulated by GTPase activating proteins (GAPs) which increase the GTP hydrolysis activity. Inhibited by GDP dissociation inhibitors (GDIs). The small GTPases Rab are key regulators of intracellular membrane trafficking, from the formation of transport vesicles to their fusion with membranes. Rabs cycle between an inactive GDP-bound form and an active GTP-bound form that is able to recruit to membranes different sets of downstream effectors directly responsible for vesicle formation, movement, tethering and fusion. RAB15 may act in concert with RAB3A in regulating aspects of synaptic vesicle membrane flow within the nerve terminal. The polypeptide is Ras-related protein Rab-15 (RAB15) (Bos taurus (Bovine)).